A 368-amino-acid polypeptide reads, in one-letter code: Peptide chain release factor 2 (368 aa).

N5-methylglutamine is present on Q250.

This sequence belongs to the prokaryotic/mitochondrial release factor family. Post-translationally, methylated by PrmC. Methylation increases the termination efficiency of RF2.

It is found in the cytoplasm. In terms of biological role, peptide chain release factor 2 directs the termination of translation in response to the peptide chain termination codons UGA and UAA. The protein is Peptide chain release factor 2 of Rickettsia felis (strain ATCC VR-1525 / URRWXCal2) (Rickettsia azadi).